Consider the following 1124-residue polypeptide: SH3 and PX domain-containing protein 2A (1124 aa).

In terms of domain architecture, PX spans 4 to 128; it reads YCVQDATVVD…RFFEARPEDV (125 aa). Residues 166 to 225 enclose the SH3 1 domain; the sequence is MILEQYVVVSNYKKQENSELSLQAGEVVDVIEKNESGWWFVSTSEEQGWVPATYLEAQNG. Residue threonine 256 is modified to Phosphothreonine. In terms of domain architecture, SH3 2 spans 266–325; the sequence is SREEKYVTVQPYTSQSKDEIGFEKGVTVEVIRKNLEGWWYIRYLGKEGWAPASYLKKAKD. Residues serine 405 and serine 420 each carry the phosphoserine modification. Disordered stretches follow at residues 414–443, 504–672, 692–830, and 886–952; these read QRAQ…PKPP, RKKP…KLKA, SVTI…PKKE, and YLVA…GKTS. The SH3 3 domain maps to 447–506; the sequence is SVEVEYYTIAEFQSCISDGISFRGGQKAEVIDKNSGGWWYVQIGEKEGWAPASYIDKRKK. Phosphoserine occurs at positions 546 and 566. Over residues 575–585 the composition is skewed to basic and acidic residues; that stretch reads SGDRGSGDKHP. Residue serine 592 is modified to Phosphoserine. Positions 607–619 are enriched in acidic residues; the sequence is SSEDVALEEETIY. 2 stretches are compositionally biased toward low complexity: residues 633 to 669 and 692 to 709; these read SARG…SLLK and SVTI…SSLS. Residue serine 643 is modified to Phosphoserine. Residues 713-739 are compositionally biased toward basic and acidic residues; sequence GDLKPRSASDAGIRDTPKVGTKKDPDV. Threonine 728 carries the phosphothreonine modification. A phosphoserine mark is found at serine 764, serine 766, and serine 812. A Phosphothreonine modification is found at threonine 822. The SH3 4 domain maps to 833-892; that stretch reads GQGATYVTCSAYQKVQDSEISFPEGAEVHVLEKAESGWWYVRFGELEGWAPSHYLVAEEN. Positions 907 to 937 form a coiled coil; it reads SSQNEGKSDSLEKIEKRVQALNTVNQSKRAT. Positions 912 to 924 are enriched in basic and acidic residues; it reads GKSDSLEKIEKRV. The span at 926–935 shows a compositional bias: polar residues; the sequence is ALNTVNQSKR. 4 positions are modified to phosphoserine: serine 993, serine 1007, serine 1008, and serine 1029. A disordered region spans residues 1020-1050; sequence KGRLAERAASQGSESPLLPTQRKGIPVSPVR. The SH3 5 domain occupies 1063 to 1124; the sequence is NLKDVYISIA…VPSNYLEKKN (62 aa).

The protein belongs to the SH3PXD2 family. In terms of assembly, interacts with ADAM12, ADAM15 and ADAM19. Interacts with NOXO1. Interacts (via SH3 domains) with NOXA1; the interaction is direct. Interacts (via N-terminus) with CYBA. Interacts with FASLG. Interacts (via PX domain) with RAB40B (GTP-bound); interaction promotes invadopodia-mediated extracellular matrix degradation. Tyrosine phosphorylated by SRC. Phosphorylation plays a regulatory role in the protein localization. The intramolecular interaction of the PX domain with the third SH3 domain maintains the protein in the cytoplasm and phosphorylation disrupts this interaction, resulting in the redistribution of the protein from cytoplasm to the perimembrane region. Phosphorylated on serine upon DNA damage, probably by ATM or ATR. As to expression, widely expressed. Not found in the spleen and testis.

It is found in the cytoplasm. It localises to the cell projection. Its subcellular location is the podosome. Its function is as follows. Adapter protein involved in invadopodia and podosome formation, extracellular matrix degradation and invasiveness of some cancer cells. Binds matrix metalloproteinases (ADAMs), NADPH oxidases (NOXs) and phosphoinositides. Acts as an organizer protein that allows NOX1- or NOX3-dependent reactive oxygen species (ROS) generation and ROS localization. In association with ADAM12, mediates the neurotoxic effect of amyloid-beta peptide. This Mus musculus (Mouse) protein is SH3 and PX domain-containing protein 2A.